Here is a 386-residue protein sequence, read N- to C-terminus: MKIHEYQAKELFANYGVPVPKGKPVFSVDEAVEAAKELGDFPVVVKAQIHAGGRGKGGGVKLAQNIDEVKTIAGEILGMQLVTHQTGPEGQKVQKLLVEQGLDIAKELYFSIIVDRATAKIVIMCSEAGGMDIEEVAASTPEKIIKVPVDPLLGVQGYHCRQAAYRLNLPPAAIKPFIKMVQGLYKMFMDTDCSLLEINPLVLTGDDGIIALDAKINFDDSALYRHKDIQEYRDLDEEEPLEVEASKFNLNYIKMDGNVGNMVNGAGLAMATMDIIKQAGAEPANFLDVGGGANAEQVENGFRIILSDKNVKGILINIFGGILRCDVLASGVVEAAKKVGLNVPVVVRMEGTNVEEGRRILAESGLNLTGAEDLKDAAAKVAQIVQ.

Positions Lys-9–Glu-244 constitute an ATP-grasp domain. ATP contacts are provided by residues Lys-46, Gly-53–Gly-55, Glu-99, Leu-102, and Glu-107. Mg(2+) contacts are provided by Asn-199 and Asp-213. Substrate contacts are provided by residues Asn-264 and Gly-321–Leu-323.

The protein belongs to the succinate/malate CoA ligase beta subunit family. As to quaternary structure, heterotetramer of two alpha and two beta subunits. The cofactor is Mg(2+).

The enzyme catalyses succinate + ATP + CoA = succinyl-CoA + ADP + phosphate. It catalyses the reaction GTP + succinate + CoA = succinyl-CoA + GDP + phosphate. The protein operates within carbohydrate metabolism; tricarboxylic acid cycle; succinate from succinyl-CoA (ligase route): step 1/1. Succinyl-CoA synthetase functions in the citric acid cycle (TCA), coupling the hydrolysis of succinyl-CoA to the synthesis of either ATP or GTP and thus represents the only step of substrate-level phosphorylation in the TCA. The beta subunit provides nucleotide specificity of the enzyme and binds the substrate succinate, while the binding sites for coenzyme A and phosphate are found in the alpha subunit. This Desulfatibacillum aliphaticivorans protein is Succinate--CoA ligase [ADP-forming] subunit beta.